Reading from the N-terminus, the 81-residue chain is Small ribosomal subunit protein bS18 (81 aa).

It belongs to the bacterial ribosomal protein bS18 family. In terms of assembly, part of the 30S ribosomal subunit. Forms a tight heterodimer with protein bS6.

Its function is as follows. Binds as a heterodimer with protein bS6 to the central domain of the 16S rRNA, where it helps stabilize the platform of the 30S subunit. This Chlamydia muridarum (strain MoPn / Nigg) protein is Small ribosomal subunit protein bS18.